The primary structure comprises 275 residues: Lectin (275 aa).

Residues M1–S30 form the signal peptide. Mn(2+)-binding residues include E149 and D151. 4 residues coordinate Ca(2+): D151, F153, N155, and D159. 2 residues coordinate Mn(2+): D159 and H166. N-linked (GlcNAc...) asparagine glycosylation is present at N217.

It belongs to the leguminous lectin family. In terms of assembly, tetramer of two alpha and two beta chains.

Functionally, D-mannose specific lectin. The chain is Lectin (LECA) from Pisum sativum (Garden pea).